Reading from the N-terminus, the 2387-residue chain is Paternally-expressed gene 3 protein (2387 aa).

The region spanning 44-126 is the SCAN box domain; sequence HQRFRNFLYV…ALLEDYEAMY (83 aa). Disordered regions lie at residues 127 to 194, 262 to 305, 321 to 371, and 392 to 423; these read EPED…RDLA, DGHS…ICEA, ARSS…AFGG, and RYHF…EARR. 4 stretches are compositionally biased toward basic and acidic residues: residues 160-179, 291-305, 321-364, and 404-423; these read SERE…DRWP, PETK…ICEA, ARSS…ERGP, and HDPR…EARR. A C2H2-type 1 zinc finger spans residues 451–473; the sequence is YVCDECGRSFAVISEFVEHQIVH. Residues 492-542 are disordered; that stretch reads SEAQSRPEGARRSEGAQAAGLAEHRGGQAQEHLRGSGDEEQDEPFLPSPTF. Positions 513–528 are enriched in basic and acidic residues; it reads AEHRGGQAQEHLRGSG. 2 consecutive C2H2-type zinc fingers follow at residues 555–577 and 610–632; these read YECK…QKIH and YECK…QKTH. The segment at 668 to 690 adopts a C2H2-type 4; degenerate zinc-finger fold; it reads YDFREGGDAFGRSSDFMEHQKIH. 3 disordered regions span residues 704–747, 764–797, and 820–858; these read PLLH…EARG, FRPP…ESPY, and DHLA…NIER. The segment covering 711 to 720 has biased composition (polar residues); the sequence is MPGSQKSHTI. Residues 846–856 show a composition bias toward basic residues; that stretch reads HQKARAKKKNI. Residues 884-906 form a C2H2-type 5 zinc finger; sequence YECLECGEFFVRSSELAEHQKIH. 57 consecutive repeat copies span residues 965–973, 974–982, 983–991, 1001–1009, 1010–1018, 1028–1036, 1046–1054, 1055–1063, 1073–1081, 1091–1099, 1109–1117, 1118–1126, 1136–1144, 1145–1153, 1154–1162, 1163–1171, 1172–1180, 1190–1198, 1199–1207, 1217–1225, 1235–1243, 1253–1261, 1280–1288, 1289–1297, 1298–1306, 1307–1315, 1316–1324, 1325–1333, 1334–1342, 1343–1351, 1352–1360, 1361–1369, 1370–1378, 1379–1387, 1388–1396, 1397–1405, 1406–1414, 1415–1423, 1424–1432, 1433–1441, 1442–1450, 1451–1459, 1460–1468, 1469–1477, 1478–1486, 1496–1504, 1505–1513, 1514–1522, 1523–1531, 1532–1540, 1541–1549, 1550–1558, 1559–1567, 1568–1576, 1577–1585, 1586–1594, and 1595–1603. Composition is skewed to polar residues over residues 965–989 and 1001–1020; these read PAQT…TSYT and PAQT…NPAA. Residues 965–1603 are 37 X 9 AA repeat of P-A-Q-T-X-Y-X-X-E; the sequence is PAQTSYAVEP…EPAQTSYSEE (639 aa). The disordered stretch occupies residues 965 to 1651; that stretch reads PAQTSYAVEP…RPDMPRNQPR (687 aa). Positions 1046–1079 are enriched in polar residues; the sequence is PAQTSCIEEPAQTSYTNPAAETSYTEEPAQTSYT. Composition is skewed to polar residues over residues 1107–1178, 1190–1206, 1217–1242, 1251–1484, and 1496–1601; these read EEPS…TSYT, PAQT…NYTK, PAQT…NYTV, EEPS…TNYT, and PAQT…TSYS. The C2H2-type 6; degenerate zinc finger occupies 1859–1881; sequence NECKECGECFATVEDLGRHQKIY. Residues 1900–1921 are disordered; it reads LGLDGSPEEELEEQEEPEEPED. Positions 1905-1921 are enriched in acidic residues; sequence SPEEELEEQEEPEEPED. C2H2-type zinc fingers lie at residues 1924 to 1946, 1980 to 2002, 2040 to 2062, 2097 to 2119, and 2148 to 2170; these read YGCK…QKVH, YECP…QKVH, PQCQ…ARGH, YECE…MRVH, and YECK…QKLH. The tract at residues 2059-2102 is disordered; it reads ARGHAGEGLPDQGQGGAGAAGPGPAPTEPQQDPGEEQRYECETC. Residues 2204–2322 form a disordered region; it reads NVEAAEPEVE…DCGECGETFP (119 aa). 2 stretches are compositionally biased toward acidic residues: residues 2208-2228 and 2257-2311; these read AEPE…EVEA and EQPD…EEPY. C2H2-type zinc fingers lie at residues 2312–2334 and 2363–2385; these read YDCG…LTAH and FKCD…QNTH.

It belongs to the krueppel C2H2-type zinc-finger protein family. In terms of assembly, homodimer. Interacts with SIAH1A and SIAH2. Interacts with TRAF2. In terms of tissue distribution, expressed at high levels in the cerebellum and at moderate levels in the testis and ovary.

Its subcellular location is the nucleus. The protein resides in the cytoplasm. Its function is as follows. Induces apoptosis in cooperation with SIAH1A. Acts as a mediator between p53/TP53 and BAX in a neuronal death pathway that is activated by DNA damage. Acts synergistically with TRAF2 and inhibits TNF induced apoptosis through activation of NF-kappa-B. This Bos taurus (Bovine) protein is Paternally-expressed gene 3 protein (PEG3).